We begin with the raw amino-acid sequence, 603 residues long: D-3-phosphoglycerate dehydrogenase 1, chloroplastic (603 aa).

The N-terminal 54 residues, 1 to 54 (MSATAAASSSIAVATNSLRNVTLSSRSPLPSAISVAFPSRGRNTLQRRLVLVSC), are a transit peptide targeting the chloroplast. NAD(+)-binding positions include 210–211 (KV), aspartate 230, 289–291 (VAR), and aspartate 315. Arginine 291 is a catalytic residue. The active site involves glutamate 320. The active-site Proton donor is histidine 339. An NAD(+)-binding site is contributed by 339–342 (HLGA). Positions 531 to 603 (IILCRQVDQP…AVEEFVFLKL (73 aa)) constitute an ACT domain.

This sequence belongs to the D-isomer specific 2-hydroxyacid dehydrogenase family. Ubiquitous, but highly expressed in roots. Expressed in vasculature, root and shoot meristems, distal part of cotyledons and leaves, anther, stigma and pollen grains. Detected at the tip of the cotyledons in late embryos.

It is found in the plastid. The protein localises to the chloroplast. The enzyme catalyses (2R)-3-phosphoglycerate + NAD(+) = 3-phosphooxypyruvate + NADH + H(+). It functions in the pathway amino-acid biosynthesis; L-serine biosynthesis; L-serine from 3-phospho-D-glycerate: step 1/3. Partially inhibited by 5 mM serine. Its function is as follows. Involved in the plastidial phosphorylated pathway of serine biosynthesis (PPSB). Required for mature pollen development. The sequence is that of D-3-phosphoglycerate dehydrogenase 1, chloroplastic (PGDH1) from Arabidopsis thaliana (Mouse-ear cress).